We begin with the raw amino-acid sequence, 287 residues long: Large ribosomal subunit protein uL2 (287 aa).

The segment at 221 to 287 is disordered; the sequence is RGSVMNPCDH…SKRSRGGRDS (67 aa). Residues 258 to 287 show a composition bias toward basic residues; that stretch reads KTRKRNKPSNRFVLRKRRRTSKRSRGGRDS.

This sequence belongs to the universal ribosomal protein uL2 family. As to quaternary structure, part of the 50S ribosomal subunit. Forms a bridge to the 30S subunit in the 70S ribosome.

Functionally, one of the primary rRNA binding proteins. Required for association of the 30S and 50S subunits to form the 70S ribosome, for tRNA binding and peptide bond formation. It has been suggested to have peptidyltransferase activity; this is somewhat controversial. Makes several contacts with the 16S rRNA in the 70S ribosome. The sequence is that of Large ribosomal subunit protein uL2 from Prochlorococcus marinus (strain MIT 9303).